We begin with the raw amino-acid sequence, 53 residues long: Light-harvesting protein B800/850/890 beta-1 chain (53 aa).

Over 1-19 (ADNMSLTGLSDEEAKEFHS) the chain is Cytoplasmic. The a bacteriochlorophyll site is built by histidine 18 and histidine 36. A helical membrane pass occupies residues 20–42 (IFMQSFLIFTAVAVVAHFLAWAW). Residues 43–53 (RPWIPGAEGYG) lie on the Periplasmic side of the membrane.

This sequence belongs to the antenna complex beta subunit family. As to quaternary structure, the core complex is formed by different alpha and beta chains, binding bacteriochlorophyll molecules, and arranged most probably in tetrameric structures disposed around the reaction center. The non-pigmented gamma chains may constitute additional components.

It is found in the cell inner membrane. In terms of biological role, antenna complexes are light-harvesting systems, which transfer the excitation energy to the reaction centers. This Halorhodospira halophila (strain DSM 244 / SL1) (Ectothiorhodospira halophila (strain DSM 244 / SL1)) protein is Light-harvesting protein B800/850/890 beta-1 chain.